We begin with the raw amino-acid sequence, 143 residues long: Deoxyuridine 5'-triphosphate nucleotidohydrolase (143 aa).

Substrate-binding positions include 62–64, asparagine 75, and 79–81; these read RSG and TID.

Belongs to the dUTPase family. The cofactor is Mg(2+).

It catalyses the reaction dUTP + H2O = dUMP + diphosphate + H(+). The protein operates within pyrimidine metabolism; dUMP biosynthesis; dUMP from dCTP (dUTP route): step 2/2. Functionally, this enzyme is involved in nucleotide metabolism: it produces dUMP, the immediate precursor of thymidine nucleotides and it decreases the intracellular concentration of dUTP so that uracil cannot be incorporated into DNA. The protein is Deoxyuridine 5'-triphosphate nucleotidohydrolase of Acaryochloris marina (strain MBIC 11017).